The primary structure comprises 269 residues: Auxin-responsive protein IAA26 (269 aa).

Residues 25 to 40 show a composition bias toward basic and acidic residues; sequence YQEDKNNTDQEKKLEL. Disordered regions lie at residues 25 to 55 and 76 to 146; these read YQED…HSAI and CFNG…KQVE. An EAR-like (transcriptional repression) motif is present at residues 38–42; that stretch reads LELRL. Composition is skewed to polar residues over residues 80–93 and 117–136; these read NHFS…SVPH and LAST…GQIN. Over residues 137-146 the composition is skewed to basic and acidic residues; that stretch reads KSDDGEKQVE. A PB1 domain is found at 151–250; it reads GMFVKINMDG…SVKRLRVIKS (100 aa).

Belongs to the Aux/IAA family. As to quaternary structure, homodimers and heterodimers. Interacts with phytochrome A. Interacts with TPL.

It is found in the nucleus. In terms of biological role, aux/IAA proteins are short-lived transcriptional factors that function as repressors of early auxin response genes at low auxin concentrations. Repression is thought to result from the interaction with auxin response factors (ARFs), proteins that bind to the auxin-responsive promoter element (AuxRE). Formation of heterodimers with ARF proteins may alter their ability to modulate early auxin response genes expression. This is Auxin-responsive protein IAA26 (IAA26) from Arabidopsis thaliana (Mouse-ear cress).